A 130-amino-acid chain; its full sequence is Small ribosomal subunit protein uS11c (130 aa).

This sequence belongs to the universal ribosomal protein uS11 family. In terms of assembly, part of the 30S ribosomal subunit.

The protein localises to the plastid. The protein resides in the chloroplast. The chain is Small ribosomal subunit protein uS11c from Marchantia polymorpha (Common liverwort).